The primary structure comprises 809 residues: MDLFIESKINSLLQFLFGSRQDFLRNFKTWSNNNNNLSIYLLIFGIVVFFYKKPDHLNYIVESVSEMTTNFRNNNSLSRWLPRSKFTHLDEEILKRGGFIAGLVNDGNTCFMNSVLQSLASSRELMEFLDNNVIRTYEEIEQNEHNEEGNGQESAQDEATHKKNTRKGGKVYGKHKKKLNRKSSSKEDEEKSQEPDITFSVALRDLLSALNAKYYRDKPYFKTNSLLKAMSKSPRKNILLGYDQEDAQEFFQNILAELESNVKSLNTEKLDTTPVAKSELPDDALVGQLNLGEVGTVYIPTEQIDPNSILHDKSIQNFTPFKLMTPLDGITAERIGCLQCGENGGIRYSVFSGLSLNLPNENIGSTLKLSQLLSDWSKPEIIEGVECNRCALTAAHSHLFGQLKEFEKKPEGSIPEKLINAVKDRVHQIEEVLAKPVIDDEDYKKLHTANMVRKCSKSKQILISRPPPLLSIHINRSVFDPRTYMIRKNNSKVLFKSRLNLAPWCCDINEINLDARLPMSKKEKAAQQDSSEDENIGGEYYTKLHERFEQEFEDSEEEKEYDDAEGNYASHYNHTKDISNYDPLNGEVDGVTSDDEDEYIEETDALGNTIKKRIIEHSDVENENVKDNEELQEIDNVSLDEPKINVEDQLETSSDEEDVIPAPPINYARSFSTVPATPLTYSLRSVIVHYGTHNYGHYIAFRKYRGCWWRISDETVYVVDEAEVLSTPGVFMLFYEYDFDEETGKMKDDLEAIQSNNEEDDEKEQEQKGVQEPKESQEQGEGEEQEEGQEQMKFERTEDHRDISGKDVN.

A USP domain is found at 101 to 738 (AGLVNDGNTC…GVFMLFYEYD (638 aa)). The active-site Nucleophile is the Cys-110. Positions 143 to 195 (NEHNEEGNGQESAQDEATHKKNTRKGGKVYGKHKKKLNRKSSSKEDEEKSQEP) are disordered. Positions 162 to 183 (KKNTRKGGKVYGKHKKKLNRKS) are enriched in basic residues. A compositionally biased stretch (basic and acidic residues) spans 184-194 (SSKEDEEKSQE). Ser-530, Ser-531, and Ser-555 each carry phosphoserine. Residues 569–596 (ASHYNHTKDISNYDPLNGEVDGVTSDDE) form a disordered region. Phosphoserine occurs at positions 618 and 638. Position 652 is a phosphothreonine (Thr-652). Ser-653, Ser-654, and Ser-670 each carry phosphoserine. His-697 (proton acceptor) is an active-site residue. The disordered stretch occupies residues 750 to 809 (LEAIQSNNEEDDEKEQEQKGVQEPKESQEQGEGEEQEEGQEQMKFERTEDHRDISGKDVN). At Ser-755 the chain carries Phosphoserine. Basic and acidic residues predominate over residues 765–777 (QEQKGVQEPKESQ). The segment covering 778-789 (EQGEGEEQEEGQ) has biased composition (acidic residues). A compositionally biased stretch (basic and acidic residues) spans 790–809 (EQMKFERTEDHRDISGKDVN).

This sequence belongs to the peptidase C19 family.

The catalysed reaction is Thiol-dependent hydrolysis of ester, thioester, amide, peptide and isopeptide bonds formed by the C-terminal Gly of ubiquitin (a 76-residue protein attached to proteins as an intracellular targeting signal).. Its function is as follows. Has an ATP-independent isopeptidase activity, cleaving at the C-terminus of the ubiquitin moiety in natural or engineered linear fusion proteins, irrespective of their size or the presence of an N-terminal extension to ubiquitin. This Saccharomyces cerevisiae (strain ATCC 204508 / S288c) (Baker's yeast) protein is Ubiquitin carboxyl-terminal hydrolase 1 (UBP1).